Here is a 305-residue protein sequence, read N- to C-terminus: MSKKLTFQEIILTLQQFWNDQDCMLMQAYDNEKGAGTMSPYTFLRAIGPEPWNAAYVEPSRRPADGRYGENPNRLYQHHQFQVVMKPSPSNIQELYLESLEKLGINPLEHDIRFVEDNWENPSTGSAGLGWEVWLDGMEITQFTYFQQVGGLATGPVTAEVTYGLERLASYIQEVDSVYDIEWADGVKYGEIFIQPEYEHSKYSFEISDQEMLLENFDKFEKEAGRALEEGLVHPAYDYVLKCSHTFNLLDARGAVSVTERAGYIARIRNLARVVAKTFVAERKRLGYPLLDEETRAKLLAEDAE.

It belongs to the class-II aminoacyl-tRNA synthetase family. Tetramer of two alpha and two beta subunits.

The protein localises to the cytoplasm. It catalyses the reaction tRNA(Gly) + glycine + ATP = glycyl-tRNA(Gly) + AMP + diphosphate. The sequence is that of Glycine--tRNA ligase alpha subunit from Streptococcus pneumoniae serotype 4 (strain ATCC BAA-334 / TIGR4).